The sequence spans 192 residues: 3-hydroxyanthranilate 3,4-dioxygenase (192 aa).

Arg50 serves as a coordination point for O2. Residues His54, Glu60, and His102 each coordinate Fe cation. Substrate is bound at residue Glu60. Residues Arg106 and Glu116 each contribute to the substrate site. Cys131, Cys134, Cys168, and Cys171 together coordinate a divalent metal cation.

Belongs to the 3-HAO family. Fe(2+) is required as a cofactor.

The protein resides in the cytoplasm. The catalysed reaction is 3-hydroxyanthranilate + O2 = (2Z,4Z)-2-amino-3-carboxymuconate 6-semialdehyde. The protein operates within cofactor biosynthesis; NAD(+) biosynthesis; quinolinate from L-kynurenine: step 3/3. Functionally, catalyzes the oxidative ring opening of 3-hydroxyanthranilate to 2-amino-3-carboxymuconate semialdehyde, which spontaneously cyclizes to quinolinate. The polypeptide is 3-hydroxyanthranilate 3,4-dioxygenase (bna1) (Neosartorya fischeri (strain ATCC 1020 / DSM 3700 / CBS 544.65 / FGSC A1164 / JCM 1740 / NRRL 181 / WB 181) (Aspergillus fischerianus)).